The following is a 318-amino-acid chain: HPr kinase/phosphorylase (318 aa).

Residues His-143 and Lys-164 contribute to the active site. 158 to 165 (GKSGVGKS) provides a ligand contact to ATP. Ser-165 contacts Mg(2+). The active-site Proton acceptor; for phosphorylation activity. Proton donor; for dephosphorylation activity is Asp-182. The interval 206–215 (MEIRGLGILN) is important for the catalytic mechanism of both phosphorylation and dephosphorylation. A Mg(2+)-binding site is contributed by Glu-207. Arg-248 is a catalytic residue. The important for the catalytic mechanism of dephosphorylation stretch occupies residues 269-274 (PVKPGR).

The protein belongs to the HPrK/P family. As to quaternary structure, homohexamer. The cofactor is Mg(2+).

It carries out the reaction [HPr protein]-L-serine + ATP = [HPr protein]-O-phospho-L-serine + ADP + H(+). The catalysed reaction is [HPr protein]-O-phospho-L-serine + phosphate + H(+) = [HPr protein]-L-serine + diphosphate. Its function is as follows. Catalyzes the ATP- as well as the pyrophosphate-dependent phosphorylation of a specific serine residue in HPr, a phosphocarrier protein of the phosphoenolpyruvate-dependent sugar phosphotransferase system (PTS). HprK/P also catalyzes the pyrophosphate-producing, inorganic phosphate-dependent dephosphorylation (phosphorolysis) of seryl-phosphorylated HPr (P-Ser-HPr). This Leptospira borgpetersenii serovar Hardjo-bovis (strain JB197) protein is HPr kinase/phosphorylase.